The primary structure comprises 513 residues: MGLQQSKEELVYQQVNYGNADGIRALRAQGAGLEWIDKEGKTPLMVASMRPDLINVVQVLIELGANVNAYRPGSYCGTALHHAAKKGLEQTVHLLLSHGANPFITNDDCHTALDLAREKGHVNVVRAIEGRISLFCGWMRENYGPGFLEAFAPQFLTRKIWAVILPREARNQTRPLKLELTIYPELQASKPQAVIKLWKCQLEEPKFNQANPSVTIFDKGTRTRYKLLPVCEGDKQQLQWFYSACCGIPQVASMVPAQPANAPLPNPSSASSLPSVISTPSKEDAELAMAINASILSAIAEGVPDVQPITTTTATNDWGNPPSNSLNGWGPPDTSAPSKTSGQVPVVTSSSSTYNGWDVPGTSSGQSSSKHNKSQNSTFVVPQEALPSLPVPTAPPLAVGTFYDGPIQYPSIDSTPVDVTMPSADGGTAVSSAKPAENEGDAKPAESDANASNSGNTPPGTCVICLDAPVEGACIPCGHMAGCMSCLKDIESKKWGCPICRAKINQIIRLYAV.

ANK repeat units follow at residues 39-69 (EGKTPLMVASMRPDLINVVQVLIELGANVNA), 75-104 (YCGTALHHAAKKGLEQTVHLLLSHGANPFI), and 108-137 (DCHTALDLAREKGHVNVVRAIEGRISLFCG). 2 stretches are compositionally biased toward polar residues: residues 309–327 (ITTTTATNDWGNPPSNSLN) and 335–355 (SAPSKTSGQVPVVTSSSSTYN). 2 disordered regions span residues 309 to 378 (ITTT…QNST) and 423 to 455 (SADGGTAVSSAKPAENEGDAKPAESDANASNSG). The segment covering 361-378 (GTSSGQSSSKHNKSQNST) has biased composition (low complexity). Residues 436 to 446 (AENEGDAKPAE) show a composition bias toward basic and acidic residues. The RING-type zinc-finger motif lies at 462 to 501 (CVICLDAPVEGACIPCGHMAGCMSCLKDIESKKWGCPICR).

It catalyses the reaction S-ubiquitinyl-[E2 ubiquitin-conjugating enzyme]-L-cysteine + [acceptor protein]-L-lysine = [E2 ubiquitin-conjugating enzyme]-L-cysteine + N(6)-ubiquitinyl-[acceptor protein]-L-lysine.. It functions in the pathway protein modification; protein ubiquitination. This Oryza sativa subsp. japonica (Rice) protein is Probable E3 ubiquitin-protein ligase XBOS34 (XBOS34).